We begin with the raw amino-acid sequence, 142 residues long: ATP synthase epsilon chain (142 aa).

It belongs to the ATPase epsilon chain family. As to quaternary structure, F-type ATPases have 2 components, CF(1) - the catalytic core - and CF(0) - the membrane proton channel. CF(1) has five subunits: alpha(3), beta(3), gamma(1), delta(1), epsilon(1). CF(0) has three main subunits: a, b and c.

It localises to the cell membrane. Functionally, produces ATP from ADP in the presence of a proton gradient across the membrane. In Lactiplantibacillus plantarum (strain ATCC BAA-793 / NCIMB 8826 / WCFS1) (Lactobacillus plantarum), this protein is ATP synthase epsilon chain.